Reading from the N-terminus, the 189-residue chain is Flavin prenyltransferase UbiX (189 aa).

FMN is bound by residues 11–13 (GAS), Ser37, 88–91 (SMRT), and Arg123. Tyr153 serves as a coordination point for dimethylallyl phosphate.

This sequence belongs to the UbiX/PAD1 family.

The enzyme catalyses dimethylallyl phosphate + FMNH2 = prenylated FMNH2 + phosphate. In terms of biological role, flavin prenyltransferase that catalyzes the synthesis of the prenylated FMN cofactor (prenyl-FMN) for 4-hydroxy-3-polyprenylbenzoic acid decarboxylase UbiD. The prenyltransferase is metal-independent and links a dimethylallyl moiety from dimethylallyl monophosphate (DMAP) to the flavin N5 and C6 atoms of FMN. The protein is Flavin prenyltransferase UbiX of Neisseria meningitidis serogroup B (strain ATCC BAA-335 / MC58).